Consider the following 392-residue polypeptide: Succinate--CoA ligase [ADP-forming] subunit beta (392 aa).

Residues 9–236 (RDLFERHGLP…QAAVDPLEQA (228 aa)) enclose the ATP-grasp domain. Residues K45, 52 to 54 (GRG), A94, and E99 contribute to the ATP site. Residues N191 and D205 each contribute to the Mg(2+) site. Substrate-binding positions include N256 and 318–320 (GIT).

The protein belongs to the succinate/malate CoA ligase beta subunit family. Heterotetramer of two alpha and two beta subunits. Mg(2+) serves as cofactor.

The enzyme catalyses succinate + ATP + CoA = succinyl-CoA + ADP + phosphate. The catalysed reaction is GTP + succinate + CoA = succinyl-CoA + GDP + phosphate. Its pathway is carbohydrate metabolism; tricarboxylic acid cycle; succinate from succinyl-CoA (ligase route): step 1/1. Succinyl-CoA synthetase functions in the citric acid cycle (TCA), coupling the hydrolysis of succinyl-CoA to the synthesis of either ATP or GTP and thus represents the only step of substrate-level phosphorylation in the TCA. The beta subunit provides nucleotide specificity of the enzyme and binds the substrate succinate, while the binding sites for coenzyme A and phosphate are found in the alpha subunit. This chain is Succinate--CoA ligase [ADP-forming] subunit beta, found in Salinispora tropica (strain ATCC BAA-916 / DSM 44818 / JCM 13857 / NBRC 105044 / CNB-440).